The sequence spans 103 residues: MYAIIRDRGMQYRVEPGQVLTIDLISAEPGSQIELGEVLLVGDAEQVKVGSPLVEGAVVRAEVLGEQKGDKIVVFRYRNKTRYRRRTGHRQRYTKIRISEIVA.

The protein belongs to the bacterial ribosomal protein bL21 family. As to quaternary structure, part of the 50S ribosomal subunit. Contacts protein L20.

Its function is as follows. This protein binds to 23S rRNA in the presence of protein L20. The sequence is that of Large ribosomal subunit protein bL21 from Chloroflexus aurantiacus (strain ATCC 29364 / DSM 637 / Y-400-fl).